A 259-amino-acid polypeptide reads, in one-letter code: 7-cyano-7-deazaguanine synthase (259 aa).

Residue 32–42 (LSGGLDSVTCL) coordinates ATP. Zn(2+) contacts are provided by C223, C233, C236, and C239.

The protein belongs to the QueC family. Requires Zn(2+) as cofactor.

The enzyme catalyses 7-carboxy-7-deazaguanine + NH4(+) + ATP = 7-cyano-7-deazaguanine + ADP + phosphate + H2O + H(+). The protein operates within purine metabolism; 7-cyano-7-deazaguanine biosynthesis. Its function is as follows. Catalyzes the ATP-dependent conversion of 7-carboxy-7-deazaguanine (CDG) to 7-cyano-7-deazaguanine (preQ(0)). The chain is 7-cyano-7-deazaguanine synthase from Psychrobacter cryohalolentis (strain ATCC BAA-1226 / DSM 17306 / VKM B-2378 / K5).